Reading from the N-terminus, the 475-residue chain is Tryptophan--tRNA ligase, cytoplasmic (475 aa).

Positions 12 to 68 (SPQELFSSIAAQGELVKSLKARKAPKEEIDSAVKMLLSLKTSYKEAMGEDYKADCPP) constitute a WHEP-TRS domain. Residues 61 to 87 (DYKADCPPGNSTPDSHGDPEAVDDKED) are disordered. Residue lysine 158 is modified to N6-succinyllysine. A 'HIGH' region motif is present at residues 168–177 (PSSEAMHVGH). Residues 353–357 (KMSAS) carry the 'KMSKS' region motif. The residue at position 355 (serine 355) is a Phosphoserine.

The protein belongs to the class-I aminoacyl-tRNA synthetase family. As to quaternary structure, homodimer. Interacts with oxidized form of GAPDH. In terms of processing, proteolytic cleavage generates 2 forms; T1-TrpRS and T2-TrpRS.

It is found in the cytoplasm. The enzyme catalyses tRNA(Trp) + L-tryptophan + ATP = L-tryptophyl-tRNA(Trp) + AMP + diphosphate + H(+). In terms of biological role, catalyzes the attachment of tryptophan to tRNA(Trp) in a two-step reaction: tryptophan is first activated by ATP to form Trp-AMP and then transferred to the acceptor end of the tRNA(Trp). Could also possess an angiostatic activity. The protein is Tryptophan--tRNA ligase, cytoplasmic (WARS1) of Oryctolagus cuniculus (Rabbit).